The chain runs to 323 residues: Vertebrate ancient opsin (323 aa).

Topologically, residues Met1–Asn38 are extracellular. The helical transmembrane segment at Phe39–Ala63 threads the bilayer. The Cytoplasmic segment spans residues Thr64–Asn75. Residues Tyr76–Asn100 traverse the membrane as a helical segment. Topologically, residues Ala101 to Glu115 are extracellular. Cys112 and Cys189 form a disulfide bridge. A helical transmembrane segment spans residues Gly116–Phe135. Residues Glu136–His154 are Cytoplasmic-facing. A helical membrane pass occupies residues Ala155–Cys178. The Extracellular portion of the chain corresponds to Ser179–Thr202. N-linked (GlcNAc...) asparagine glycosylation is present at Asn200. The chain crosses the membrane as a helical span at residues Tyr203–Leu230. The Cytoplasmic portion of the chain corresponds to Arg231–Arg250. Residues Met251–Thr274 form a helical membrane-spanning segment. The Extracellular segment spans residues Ala275–Asp282. The helical transmembrane segment at Pro283 to Met307 threads the bilayer. Position 294 is an N6-(retinylidene)lysine (Lys294). Topologically, residues Asn308–Ala323 are cytoplasmic.

The protein belongs to the G-protein coupled receptor 1 family. Opsin subfamily. Post-translationally, phosphorylated on some or all of the serine and threonine residues present in the C-terminal region.

It localises to the membrane. This is Vertebrate ancient opsin from Salmo salar (Atlantic salmon).